Consider the following 269-residue polypeptide: Ribosomal RNA small subunit methyltransferase J (269 aa).

Residues 125–126 and Asp-179 each bind S-adenosyl-L-methionine; that span reads ER.

It belongs to the methyltransferase superfamily. RsmJ family.

It is found in the cytoplasm. The enzyme catalyses guanosine(1516) in 16S rRNA + S-adenosyl-L-methionine = N(2)-methylguanosine(1516) in 16S rRNA + S-adenosyl-L-homocysteine + H(+). In terms of biological role, specifically methylates the guanosine in position 1516 of 16S rRNA. The polypeptide is Ribosomal RNA small subunit methyltransferase J (Pseudomonas savastanoi pv. phaseolicola (strain 1448A / Race 6) (Pseudomonas syringae pv. phaseolicola (strain 1448A / Race 6))).